The following is a 203-amino-acid chain: Peptidyl-prolyl cis-trans isomerase FKBP11 (203 aa).

Positions 1-29 (MTLRPSLLPLRLLLLLLLLLRGAVCQAEA) are cleaved as a signal peptide. The 88-residue stretch at 59–146 (GDTLHIHYSG…HFDVELIALI (88 aa)) folds into the PPIase FKBP-type domain. The chain crosses the membrane as a helical span at residues 158-178 (ILPLVGMAMVPALLGLIGYHL).

It belongs to the FKBP-type PPIase family. As to quaternary structure, interacts with IFITM5.

It is found in the membrane. The enzyme catalyses [protein]-peptidylproline (omega=180) = [protein]-peptidylproline (omega=0). In terms of biological role, PPIases accelerate the folding of proteins during protein synthesis. This chain is Peptidyl-prolyl cis-trans isomerase FKBP11 (FKBP11), found in Bos taurus (Bovine).